The chain runs to 262 residues: MTNNFMAPEAAAALLKAATADGRPIAPLRDRLAIADQDSAYAVQEINTRAWLAEGRRLVGRKIGLTSLAVQAQLGVDQPDFGMLFADMAVGDGEIVAAGRLIQPKVEAEVALILGRDLTQERHTYADLIRATEYALPSIEIVDSRIENWNIKFVDTVADNASSGLFVLGGRSVRLCDIDLTACAMEMKRGDEVVSRGNGRACLGSPLNAAIWLADVMVRCGRPLQAGDIVLTGALGPMVAVKSGERFDVSIEGLGNVSALFA.

Belongs to the hydratase/decarboxylase family. MhpD subfamily. It depends on a divalent metal cation as a cofactor.

It catalyses the reaction (S)-4-hydroxy-2-oxopentanoate = (2Z)-2-hydroxypenta-2,4-dienoate + H2O. It functions in the pathway aromatic compound metabolism; 3-phenylpropanoate degradation. Functionally, catalyzes the conversion of 2-hydroxypentadienoic acid (enolic form of 2-oxopent-4-enoate) to 4-hydroxy-2-ketopentanoic acid. The polypeptide is 2-keto-4-pentenoate hydratase 2 (Dechloromonas aromatica (strain RCB)).